The following is a 420-amino-acid chain: Protein-lysine N-trimethyltransferase SMYD5 (420 aa).

An SET domain is found at 29 to 358 (AEARFISSAK…AGEEICISYL (330 aa)). The MYND-type zinc-finger motif lies at 104–142 (PEQCSIRKDLHQQCPRCQVTYCSAECRQAALEQYHQVLC). Tyr-357 provides a ligand contact to S-adenosyl-L-methionine. Residues 392–420 (DDPDVTSDEEEEAEGETDDAELEDEMTDV) form a disordered region.

This sequence belongs to the class V-like SAM-binding methyltransferase superfamily.

Its subcellular location is the cytoplasm. It catalyses the reaction L-lysyl-[protein] + 3 S-adenosyl-L-methionine = N(6),N(6),N(6)-trimethyl-L-lysyl-[protein] + 3 S-adenosyl-L-homocysteine + 3 H(+). The catalysed reaction is L-lysyl(20)-[histone H4] + 3 S-adenosyl-L-methionine = N(6),N(6),N(6)-trimethyl-L-lysyl(20)-[histone H4] + 3 S-adenosyl-L-homocysteine + 3 H(+). The enzyme catalyses L-lysyl(36)-[histone H3] + 3 S-adenosyl-L-methionine = N(6),N(6),N(6)-trimethyl-L-lysyl(36)-[histone H3] + 3 S-adenosyl-L-homocysteine + 3 H(+). In terms of biological role, protein-lysine N-trimethyltransferase that specifically catalyzes trimethylation of 'Lys-22' of the RPL40/eL40 subunit of the 60S ribosome, thereby promoting translation elongation and protein synthesis. May also act as a histone methyltransferase in the context of histone octamers, but not on nucleosome substrates: trimethylates 'Lys-36' of histone H3 and 'Lys-20' of histone H4 to form H3K36me3 and H4K20me3, respectively. The histone methyltransferase activity, which is independent of its SET domain, is however unsure in vivo. This Gallus gallus (Chicken) protein is Protein-lysine N-trimethyltransferase SMYD5 (SMYD5).